Here is a 460-residue protein sequence, read N- to C-terminus: NADH-ubiquinone oxidoreductase chain 4 (460 aa).

The next 12 membrane-spanning stretches (helical) occupy residues Pro20–Phe42, Pro61–Ser81, Gln93–Ala113, Thr114–Ile134, Thr148–Leu168, Ile195–Leu215, Pro225–Met245, Leu258–Leu278, Ser285–Ile304, Trp308–Leu330, Ile351–Pro371, and Ile394–Met414.

It belongs to the complex I subunit 4 family.

It localises to the mitochondrion membrane. It catalyses the reaction a ubiquinone + NADH + 5 H(+)(in) = a ubiquinol + NAD(+) + 4 H(+)(out). Its function is as follows. Core subunit of the mitochondrial membrane respiratory chain NADH dehydrogenase (Complex I) that is believed to belong to the minimal assembly required for catalysis. Complex I functions in the transfer of electrons from NADH to the respiratory chain. The immediate electron acceptor for the enzyme is believed to be ubiquinone. The chain is NADH-ubiquinone oxidoreductase chain 4 (MT-ND4) from Carassius auratus (Goldfish).